The sequence spans 382 residues: MAAQRPLTIALVAGETSGDILGAGLIRALKARVPNARFVGVAGPRMQAEGCEAWYEMEELAVMGIVEVLGRLRRLLHIRADLTRRFTELKPDVFVGIDAPDFNITLEGNLKKQGIKTIHYVSPSVWAWRQKRVFKIGRSTHMVLAFLPFEKAFYDKFNVPCRFIGHTMADAMPLDPDKNAARDVLGIPHDAHCLALLPGSRGAEVEMLSADFLKTAQLLRQRYPDLEVVVPLVNAKRREQFEKIKAEVAPDLAVHLLDGMAREAMIASDAALLASGTAALECMLAKCPMVVGYRMKPFTFWLAKRLVKTEYVSLPNLLAGRELVKELLQEECEPQKLAEALLPLLANGKTSHAMHDTFRELHQQIRCNADEQAANAVLELAQ.

Belongs to the LpxB family.

The enzyme catalyses 2-N,3-O-bis[(3R)-3-hydroxytetradecanoyl]-alpha-D-glucosaminyl 1-phosphate + UDP-2-N,3-O-bis[(3R)-3-hydroxytetradecanoyl]-alpha-D-glucosamine = lipid A disaccharide (E. coli) + UDP + H(+). It carries out the reaction a lipid X + a UDP-2-N,3-O-bis[(3R)-3-hydroxyacyl]-alpha-D-glucosamine = a lipid A disaccharide + UDP + H(+). The protein operates within glycolipid biosynthesis; lipid IV(A) biosynthesis; lipid IV(A) from (3R)-3-hydroxytetradecanoyl-[acyl-carrier-protein] and UDP-N-acetyl-alpha-D-glucosamine: step 5/6. In terms of biological role, condensation of UDP-2,3-diacylglucosamine and 2,3-diacylglucosamine-1-phosphate to form lipid A disaccharide, a precursor of lipid A, a phosphorylated glycolipid that anchors the lipopolysaccharide to the outer membrane of the cell. This is Lipid-A-disaccharide synthase from Salmonella paratyphi B (strain ATCC BAA-1250 / SPB7).